We begin with the raw amino-acid sequence, 100 residues long: UPF0213 protein YhbQ (100 aa).

The 76-residue stretch at Thr-2–Arg-77 folds into the GIY-YIG domain.

Belongs to the UPF0213 family.

The chain is UPF0213 protein YhbQ from Escherichia coli O81 (strain ED1a).